The chain runs to 402 residues: C2H2 finger domain transcription factor CON7 (402 aa).

The disordered stretch occupies residues 1 to 247 (MLASSRQPRH…GAQQHKRPRR (247 aa)). 2 stretches are compositionally biased toward polar residues: residues 19–49 (LSSSTLHRSGSPQTGTLRQDATTPTLATSVG) and 72–86 (CGDNQSEAQSVTVDT). Residues 87 to 98 (SSAAQYNASAQQ) are compositionally biased toward low complexity. Polar residues-rich tracts occupy residues 99–116 (EVRSNNPGNYSASATPTS) and 125–151 (ARSSSFPDHLQQRSYHPASNHSGSSGD). A C2H2-type zinc finger spans residues 256-282 (YKCGWQGCEKAYGTLNHLNAHVTMQSH). Residues 289–323 (EEFKEIRKEWKARKKEEEAARKADEERQRQAAQSQ) are a coiled coil. The span at 302 to 317 (KKEEEAARKADEERQR) shows a compositional bias: basic and acidic residues. Positions 302–402 (KKEEEAARKA…GSNQAMYNQR (101 aa)) are disordered. 3 stretches are compositionally biased toward polar residues: residues 322–341 (SQGGSTEGQAGSDVSQSSNG), 363–373 (AATSTSVQQQP), and 392–402 (GGSNQAMYNQR).

Its subcellular location is the nucleus. Its function is as follows. Transcription factor that plays a central role in appressorium formation and pathogenicity. Required for the expression of a large set of genes including factors that might play a role in membrane metabolism and ergosterol biosynthesis, the chitin-binding protein CBP1,as well as CHS7 that is essential for normal pathogenic development. In Pyricularia oryzae (strain 70-15 / ATCC MYA-4617 / FGSC 8958) (Rice blast fungus), this protein is C2H2 finger domain transcription factor CON7.